A 115-amino-acid chain; its full sequence is Nucleoid-associated protein Ccel_0243 (115 aa).

It belongs to the YbaB/EbfC family. As to quaternary structure, homodimer.

The protein localises to the cytoplasm. It is found in the nucleoid. In terms of biological role, binds to DNA and alters its conformation. May be involved in regulation of gene expression, nucleoid organization and DNA protection. This chain is Nucleoid-associated protein Ccel_0243, found in Ruminiclostridium cellulolyticum (strain ATCC 35319 / DSM 5812 / JCM 6584 / H10) (Clostridium cellulolyticum).